Reading from the N-terminus, the 486-residue chain is MSQPPPEPGPVRRRTVRRRAIVPGQGRGPGRWSQRLPRGARGADRDGFAAFLRAETTGGLLLLAATVAALVWANTAPGTYHTVWSTPAGLGPSWLHLADMHLTDWVADALLAVFFFTVGLELKRELTLGTLADRRSAALPVAAAAGGMLAPALLCLALTHHTPGAGHAWAIPVATDIAFALGVLSLAGPRVPPGLRTVLLGLAVADDLGGILLIALGLNHGINPAWLATATTLLATTALAHHRRWTSPLLHLPLAAAVWISLHAAGIHPTVAGVALGLLVRVHPDPDEPEAPATRLERHLGPINAAVILPAFALSATGVSLTPHALLHVATDPISRGVAVGLLAGKLLGVPAGAWLAVRLHLARLPDGVRWRHLVPLGLLAGIGYTVSLLITRLALPDPTAVDGASTAILTASVAASALALTALRSPLATVGAPATRGSSRPATQVGGVAGPIPQTRRESDGGPTGGQEPPPARVRRAPPASPHPR.

The next 11 membrane-spanning stretches (helical) occupy residues 58–78, 102–122, 138–158, 168–188, 198–218, 220–240, 260–280, 300–320, 338–358, 374–394, and 404–424; these read GGLL…TAPG, LTDW…GLEL, ALPV…CLAL, AWAI…SLAG, VLLG…ALGL, HGIN…TALA, ISLH…GLLV, LGPI…TGVS, VAVG…WLAV, LVPL…ITRL, and GAST…LTAL. Positions 432–486 are disordered; it reads GAPATRGSSRPATQVGGVAGPIPQTRRESDGGPTGGQEPPPARVRRAPPASPHPR.

The protein belongs to the NhaA Na(+)/H(+) (TC 2.A.33) antiporter family.

It is found in the cell membrane. It catalyses the reaction Na(+)(in) + 2 H(+)(out) = Na(+)(out) + 2 H(+)(in). In terms of biological role, na(+)/H(+) antiporter that extrudes sodium in exchange for external protons. The polypeptide is Na(+)/H(+) antiporter NhaA 2 (Frankia alni (strain DSM 45986 / CECT 9034 / ACN14a)).